A 272-amino-acid polypeptide reads, in one-letter code: Large ribosomal subunit protein uL2cz/uL2cy (272 aa).

Positions 1–13 (MHLYKTSTPSTRN) are enriched in polar residues. 2 disordered regions span residues 1–27 (MHLY…PRNN) and 222–272 (NPVD…RRSK).

It belongs to the universal ribosomal protein uL2 family. Part of the 50S ribosomal subunit.

It is found in the plastid. The protein localises to the chloroplast. This is Large ribosomal subunit protein uL2cz/uL2cy (rpl2-A) from Buxus microphylla (Littleleaf boxwood).